The chain runs to 165 residues: GTPase activating protein 1 (165 aa).

Residues 1–105 enclose the C2 domain; the sequence is MLGHLVGLVK…VVKMKIEGVA (105 aa). Residues R22, D23, D28, D74, K75, D76, and D81 each coordinate Ca(2+).

It belongs to the plant CAR protein family. Binds to PYR/PYL/RCAR abscisic acid intracellular receptors in an ABA-independent manner, both at the plasma membrane and in the nucleus. Binds phospholipids in a Ca(2+)-dependent manner. Interacts with YchF1.

It localises to the cell membrane. The protein resides in the nucleus. Its subcellular location is the cytoplasm. It is found in the cytosol. Its function is as follows. Mediates the transient calcium-dependent interaction of PYR/PYL/RCAR abscisic acid (ABA) receptors with the plasma membrane and thus regulates ABA sensitivity. Stimulates the GTPase/ATPase activities of YchF1, and regulates its subcellular localization. Promotes tolerance towards salinity stress by limiting the accumulation of reactive oxygen species (ROS). Promotes resistance to bacterial pathogens. This chain is GTPase activating protein 1, found in Oryza sativa subsp. indica (Rice).